The chain runs to 62 residues: MGKQCYVTGRKASTGNNRSHALNANKRRFNANLQKVRILVDGKPKKVWVSARALKSGKVTRV.

The protein belongs to the bacterial ribosomal protein bL28 family.

In Staphylococcus haemolyticus (strain JCSC1435), this protein is Large ribosomal subunit protein bL28.